The sequence spans 188 residues: Peptidyl-tRNA hydrolase (188 aa).

Residue Phe-15 coordinates tRNA. His-20 (proton acceptor) is an active-site residue. TRNA is bound by residues Tyr-64, Asn-66, and Asn-112.

Belongs to the PTH family. In terms of assembly, monomer.

Its subcellular location is the cytoplasm. The catalysed reaction is an N-acyl-L-alpha-aminoacyl-tRNA + H2O = an N-acyl-L-amino acid + a tRNA + H(+). Its function is as follows. Hydrolyzes ribosome-free peptidyl-tRNAs (with 1 or more amino acids incorporated), which drop off the ribosome during protein synthesis, or as a result of ribosome stalling. Catalyzes the release of premature peptidyl moieties from peptidyl-tRNA molecules trapped in stalled 50S ribosomal subunits, and thus maintains levels of free tRNAs and 50S ribosomes. The chain is Peptidyl-tRNA hydrolase from Borreliella afzelii (strain PKo) (Borrelia afzelii).